A 205-amino-acid chain; its full sequence is Small ribosomal subunit protein uS4 (205 aa).

Basic and acidic residues predominate over residues 1–16 (MSKRETTKYKIDRRMG). Positions 1–46 (MSKRETTKYKIDRRMGENIWGRPKSPVNRRDYGPGQHGQRRKGKLS) are disordered. An S4 RNA-binding domain is found at 94–157 (SRLDAVIYRA…KQLVLVLESV (64 aa)).

Belongs to the universal ribosomal protein uS4 family. As to quaternary structure, part of the 30S ribosomal subunit. Contacts protein S5. The interaction surface between S4 and S5 is involved in control of translational fidelity.

In terms of biological role, one of the primary rRNA binding proteins, it binds directly to 16S rRNA where it nucleates assembly of the body of the 30S subunit. Functionally, with S5 and S12 plays an important role in translational accuracy. In Bartonella quintana (strain Toulouse) (Rochalimaea quintana), this protein is Small ribosomal subunit protein uS4.